The sequence spans 284 residues: 2,3,4,5-tetrahydropyridine-2,6-dicarboxylate N-succinyltransferase (284 aa).

Residues Arg-111 and Asp-148 each coordinate substrate.

It belongs to the transferase hexapeptide repeat family. Homotrimer.

The protein localises to the cytoplasm. It catalyses the reaction (S)-2,3,4,5-tetrahydrodipicolinate + succinyl-CoA + H2O = (S)-2-succinylamino-6-oxoheptanedioate + CoA. The protein operates within amino-acid biosynthesis; L-lysine biosynthesis via DAP pathway; LL-2,6-diaminopimelate from (S)-tetrahydrodipicolinate (succinylase route): step 1/3. The sequence is that of 2,3,4,5-tetrahydropyridine-2,6-dicarboxylate N-succinyltransferase from Ehrlichia ruminantium (strain Gardel).